A 484-amino-acid chain; its full sequence is uncharacterized protein (484 aa).

This sequence to M.thermoautotrophicum MTH1153.

This is an uncharacterized protein from Methanocaldococcus jannaschii (strain ATCC 43067 / DSM 2661 / JAL-1 / JCM 10045 / NBRC 100440) (Methanococcus jannaschii).